The following is a 309-amino-acid chain: Porphobilinogen deaminase (309 aa).

The residue at position 242 (Cys242) is an S-(dipyrrolylmethanemethyl)cysteine.

It belongs to the HMBS family. As to quaternary structure, monomer. Dipyrromethane serves as cofactor.

It catalyses the reaction 4 porphobilinogen + H2O = hydroxymethylbilane + 4 NH4(+). It participates in porphyrin-containing compound metabolism; protoporphyrin-IX biosynthesis; coproporphyrinogen-III from 5-aminolevulinate: step 2/4. Tetrapolymerization of the monopyrrole PBG into the hydroxymethylbilane pre-uroporphyrinogen in several discrete steps. In Legionella pneumophila (strain Paris), this protein is Porphobilinogen deaminase.